We begin with the raw amino-acid sequence, 2563 residues long: Highly reducing polyketide synthase 2 (2563 aa).

Positions Met-11–Asp-451 constitute a Ketosynthase family 3 (KS3) domain. Catalysis depends on for beta-ketoacyl synthase activity residues Cys-182, His-317, and His-357. One can recognise a Malonyl-CoA:ACP transacylase (MAT) domain in the interval Phe-589–Ser-890. The N-terminal hotdog fold stretch occupies residues Gly-970–Asn-1101. One can recognise a PKS/mFAS DH domain in the interval Gly-970 to His-1269. His-1002 serves as the catalytic Proton acceptor; for dehydratase activity. A C-terminal hotdog fold region spans residues Thr-1126–His-1269. Asp-1186 serves as the catalytic Proton donor; for dehydratase activity. A methyltransferase (CMet) domain region spans residues Phe-1296–Asp-1618. The Enoyl reductase (ER) domain maps to Gly-1858–Val-2168. Residues Ser-2192–Ser-2370 enclose the Ketoreductase (KR) domain. Residues Ser-2480–Ser-2561 enclose the Carrier domain. Residue Ser-2521 is modified to O-(pantetheine 4'-phosphoryl)serine.

Requires pantetheine 4'-phosphate as cofactor.

Its pathway is secondary metabolite biosynthesis. Highly reducing polyketide synthase; part of the gene cluster that mediates the biosynthesis of the tetraketides fugralins such as linear fugralin A and cyclic fugralin B, volatile compounds that play a role in the asexual reproductive cycle but are not involved in pathogenicity. One of the key features of fugralins is the presence of a double methyl group, which is only rarely encountered in fungal secondary metabolites. As the fugralins cluster does not contain an independent methyltransferase, the PKS FGR1 is probably responsible for adding two methyl groups to the same carbon atom. Fugralin B is similar to fugralin A except for a cyclization between the carboxylic acid C-8 and the alcohol on C-4 resulting in a six membered lactone ring, probably catalyzed by the cyclase FGR4. The exact role of the individual cluster genes remains unknown and further work is needed to unravel the biosynthetic pathway. This is Highly reducing polyketide synthase 2 from Gibberella zeae (strain ATCC MYA-4620 / CBS 123657 / FGSC 9075 / NRRL 31084 / PH-1) (Wheat head blight fungus).